The primary structure comprises 472 residues: Methylenetetrahydrofolate--tRNA-(uracil-5-)-methyltransferase TrmFO (472 aa).

15-20 contacts FAD; it reads GGGLAG.

The protein belongs to the MnmG family. TrmFO subfamily. The cofactor is FAD.

The protein localises to the cytoplasm. It carries out the reaction uridine(54) in tRNA + (6R)-5,10-methylene-5,6,7,8-tetrahydrofolate + NADH + H(+) = 5-methyluridine(54) in tRNA + (6S)-5,6,7,8-tetrahydrofolate + NAD(+). The enzyme catalyses uridine(54) in tRNA + (6R)-5,10-methylene-5,6,7,8-tetrahydrofolate + NADPH + H(+) = 5-methyluridine(54) in tRNA + (6S)-5,6,7,8-tetrahydrofolate + NADP(+). Catalyzes the folate-dependent formation of 5-methyl-uridine at position 54 (M-5-U54) in all tRNAs. The sequence is that of Methylenetetrahydrofolate--tRNA-(uracil-5-)-methyltransferase TrmFO from Rhizobium meliloti (strain 1021) (Ensifer meliloti).